A 236-amino-acid polypeptide reads, in one-letter code: Ras-related protein RabY (236 aa).

18–25 (GDRKTGKT) lines the GTP pocket. An Effector region motif is present at residues 40 to 48 (YRQTNLLHF). GTP-binding positions include 66–70 (DSQAD) and 126–129 (NKSD). The span at 192–225 (QQQQQQQQQQQQQQQQQQQQQQQQQQQQQQQHQQ) shows a compositional bias: low complexity. Positions 192–236 (QQQQQQQQQQQQQQQQQQQQQQQQQQQQQQQHQQSSKTKIGCLIQ) are disordered. Cys233 is modified (cysteine methyl ester). Cys233 carries S-geranylgeranyl cysteine lipidation. The propeptide at 234–236 (LIQ) is removed in mature form.

This sequence belongs to the small GTPase superfamily. Rab family.

It localises to the cell membrane. The polypeptide is Ras-related protein RabY (rabY) (Dictyostelium discoideum (Social amoeba)).